The primary structure comprises 306 residues: Pantothenate kinase (306 aa).

90–97 serves as a coordination point for ATP; sequence GSVAVGKS.

Belongs to the prokaryotic pantothenate kinase family.

Its subcellular location is the cytoplasm. The enzyme catalyses (R)-pantothenate + ATP = (R)-4'-phosphopantothenate + ADP + H(+). Its pathway is cofactor biosynthesis; coenzyme A biosynthesis; CoA from (R)-pantothenate: step 1/5. This is Pantothenate kinase from Ligilactobacillus salivarius (strain UCC118) (Lactobacillus salivarius).